Reading from the N-terminus, the 177-residue chain is Small ribosomal subunit protein uS4 (177 aa).

The S4 RNA-binding domain occupies 104–166; the sequence is RRLQTIVYKK…PTSPFKQHPP (63 aa). Residues 158 to 177 are disordered; that stretch reads TSPFKQHPPTQQGEENVQQA. Residues 165 to 177 show a composition bias toward polar residues; it reads PPTQQGEENVQQA.

It belongs to the universal ribosomal protein uS4 family. Part of the 30S ribosomal subunit. Contacts protein S5. The interaction surface between S4 and S5 is involved in control of translational fidelity.

In terms of biological role, one of the primary rRNA binding proteins, it binds directly to 16S rRNA where it nucleates assembly of the body of the 30S subunit. Its function is as follows. With S5 and S12 plays an important role in translational accuracy. This is Small ribosomal subunit protein uS4 from Sulfurisphaera tokodaii (strain DSM 16993 / JCM 10545 / NBRC 100140 / 7) (Sulfolobus tokodaii).